Here is a 149-residue protein sequence, read N- to C-terminus: Transcriptional repressor NrdR (149 aa).

A zinc finger lies at cysteine 3–cysteine 34. One can recognise an ATP-cone domain in the interval proline 49–glutamate 139.

It belongs to the NrdR family. Zn(2+) is required as a cofactor.

Its function is as follows. Negatively regulates transcription of bacterial ribonucleotide reductase nrd genes and operons by binding to NrdR-boxes. This chain is Transcriptional repressor NrdR, found in Photorhabdus laumondii subsp. laumondii (strain DSM 15139 / CIP 105565 / TT01) (Photorhabdus luminescens subsp. laumondii).